We begin with the raw amino-acid sequence, 323 residues long: Germacrene A synthase (323 aa).

Mg(2+) is bound by residues D82, D86, N222, S226, and E230. The DDXXD motif signature appears at 82–86 (DDQCD).

It belongs to the terpene synthase family. It depends on Mg(2+) as a cofactor.

It catalyses the reaction (2E,6E)-farnesyl diphosphate = 5-epi-alpha-selinene + diphosphate. Catalyzes the cyclization of farnesyl diphosphate (FPP) to the sesquiterpene germacrene A. The chain is Germacrene A synthase from Nostoc punctiforme (strain ATCC 29133 / PCC 73102).